We begin with the raw amino-acid sequence, 249 residues long: Small ribosomal subunit protein uS2 (249 aa).

It belongs to the universal ribosomal protein uS2 family.

This chain is Small ribosomal subunit protein uS2, found in Listeria monocytogenes serovar 1/2a (strain ATCC BAA-679 / EGD-e).